Consider the following 129-residue polypeptide: Glycine cleavage system H protein (129 aa).

Residues Ser24–Met106 enclose the Lipoyl-binding domain. An N6-lipoyllysine modification is found at Lys65.

It belongs to the GcvH family. As to quaternary structure, the glycine cleavage system is composed of four proteins: P, T, L and H. Requires (R)-lipoate as cofactor.

The glycine cleavage system catalyzes the degradation of glycine. The H protein shuttles the methylamine group of glycine from the P protein to the T protein. This is Glycine cleavage system H protein from Shewanella baltica (strain OS155 / ATCC BAA-1091).